The sequence spans 226 residues: Regulator of microtubule dynamics protein 1 (226 aa).

This sequence belongs to the FAM82/RMD family. In terms of assembly, interacts with air-2.

It is found in the cytoplasm. It localises to the cytoskeleton. The protein resides in the spindle pole. Functionally, acts in chromosome segregation and organization during mitosis. In Caenorhabditis elegans, this protein is Regulator of microtubule dynamics protein 1 (rmd-1).